A 148-amino-acid polypeptide reads, in one-letter code: Nucleoside diphosphate kinase 1 (148 aa).

The ATP site is built by Lys-9, Phe-57, Arg-85, Thr-91, Arg-102, and Asn-112. His-115 functions as the Pros-phosphohistidine intermediate in the catalytic mechanism.

The protein belongs to the NDK family. Mg(2+) serves as cofactor.

The catalysed reaction is a 2'-deoxyribonucleoside 5'-diphosphate + ATP = a 2'-deoxyribonucleoside 5'-triphosphate + ADP. The enzyme catalyses a ribonucleoside 5'-diphosphate + ATP = a ribonucleoside 5'-triphosphate + ADP. Its function is as follows. Major role in the synthesis of nucleoside triphosphates other than ATP. The ATP gamma phosphate is transferred to the NDP beta phosphate via a ping-pong mechanism, using a phosphorylated active-site intermediate. This is Nucleoside diphosphate kinase 1 (NDKP1) from Mesembryanthemum crystallinum (Common ice plant).